A 156-amino-acid polypeptide reads, in one-letter code: Nascent polypeptide-associated complex subunit beta (156 aa).

2 disordered regions span residues 1–42 and 129–156; these read MPID…KDDT and QANE…AEVE. Residues 38-103 enclose the NAC-A/B domain; sequence NKDDTKLHNQ…AQEKNLQELF (66 aa).

Belongs to the NAC-beta family. Part of the nascent polypeptide-associated complex (NAC), consisting of EGD2 and EGD1. NAC associates with ribosomes via EGD1.

Its subcellular location is the cytoplasm. It localises to the nucleus. Functionally, component of the nascent polypeptide-associated complex (NAC), a dynamic component of the ribosomal exit tunnel, protecting the emerging polypeptides from interaction with other cytoplasmic proteins to ensure appropriate nascent protein targeting. The NAC complex also promotes mitochondrial protein import by enhancing productive ribosome interactions with the outer mitochondrial membrane and blocks the inappropriate interaction of ribosomes translating non-secretory nascent polypeptides with translocation sites in the membrane of the endoplasmic reticulum. EGD1 may act as a transcription factor that exert a negative effect on the expression of several genes that are transcribed by RNA polymerase II. This is Nascent polypeptide-associated complex subunit beta (EGD1) from Candida glabrata (strain ATCC 2001 / BCRC 20586 / JCM 3761 / NBRC 0622 / NRRL Y-65 / CBS 138) (Yeast).